The primary structure comprises 333 residues: Fructose-1,6-bisphosphatase class 1 (333 aa).

Residues E92, D113, L115, and D116 each coordinate Mg(2+). Residues 116 to 119 (DGSS), N209, Y242, and K272 each bind substrate. E278 serves as a coordination point for Mg(2+).

This sequence belongs to the FBPase class 1 family. Homotetramer. Mg(2+) is required as a cofactor.

The protein resides in the cytoplasm. The enzyme catalyses beta-D-fructose 1,6-bisphosphate + H2O = beta-D-fructose 6-phosphate + phosphate. The protein operates within carbohydrate biosynthesis; Calvin cycle. In Chlorobaculum tepidum (strain ATCC 49652 / DSM 12025 / NBRC 103806 / TLS) (Chlorobium tepidum), this protein is Fructose-1,6-bisphosphatase class 1.